A 1454-amino-acid chain; its full sequence is Coiled-coil domain-containing protein 18 (1454 aa).

Ser-45 carries the post-translational modification Phosphoserine. 4 coiled-coil regions span residues 107–138 (APVD…HSLM), 170–402 (ILEE…ISQL), 438–464 (KLVI…NLTA), and 508–1309 (TMNK…SGHE). The segment at 828–851 (QKQRESSAEKLRKMEEKCESAAHE) is disordered. Ser-1355 is modified (phosphoserine).

The protein localises to the cytoplasm. It localises to the cytoskeleton. The protein resides in the microtubule organizing center. Its subcellular location is the centrosome. It is found in the centriolar satellite. This chain is Coiled-coil domain-containing protein 18 (CCDC18), found in Homo sapiens (Human).